We begin with the raw amino-acid sequence, 519 residues long: Golgi-associated kinase 1B (519 aa).

The Cytoplasmic segment spans residues 1 to 37 (MTCPDKPGQLINWFICSLCVPRVRKLWSSRRPRTRRN). The chain crosses the membrane as a helical; Signal-anchor for type II membrane protein span at residues 38–55 (LLLGTACAIYLGFLVSQV). The Extracellular portion of the chain corresponds to 56 to 519 (GRASLQHGQA…HGVKVLPMNE (464 aa)). The segment at 62 to 103 (HGQAAEKGPHRSRDTAEPSFPEIPLDGTLAPPESQGNGSTLQ) is disordered. The segment covering 68 to 77 (KGPHRSRDTA) has biased composition (basic and acidic residues). The N-linked (GlcNAc...) asparagine glycan is linked to Asn-289.

Belongs to the GASK family.

The protein resides in the golgi apparatus membrane. The chain is Golgi-associated kinase 1B from Homo sapiens (Human).